The chain runs to 283 residues: Diaminopimelate epimerase (283 aa).

The substrate site is built by Asn13, Gln45, and Asn65. Cys74 acts as the Proton donor in catalysis. Residues 75–76 (GN), Asn156, Asn190, and 208–209 (ER) contribute to the substrate site. The Proton acceptor role is filled by Cys217. 218–219 (GS) serves as a coordination point for substrate.

The protein belongs to the diaminopimelate epimerase family. Homodimer.

It localises to the cytoplasm. It catalyses the reaction (2S,6S)-2,6-diaminopimelate = meso-2,6-diaminopimelate. Its pathway is amino-acid biosynthesis; L-lysine biosynthesis via DAP pathway; DL-2,6-diaminopimelate from LL-2,6-diaminopimelate: step 1/1. Functionally, catalyzes the stereoinversion of LL-2,6-diaminopimelate (L,L-DAP) to meso-diaminopimelate (meso-DAP), a precursor of L-lysine and an essential component of the bacterial peptidoglycan. The polypeptide is Diaminopimelate epimerase (Bartonella tribocorum (strain CIP 105476 / IBS 506)).